Consider the following 230-residue polypeptide: Large ribosomal subunit protein uL1 (230 aa).

This sequence belongs to the universal ribosomal protein uL1 family. Part of the 50S ribosomal subunit.

Functionally, binds directly to 23S rRNA. The L1 stalk is quite mobile in the ribosome, and is involved in E site tRNA release. In terms of biological role, protein L1 is also a translational repressor protein, it controls the translation of the L11 operon by binding to its mRNA. The polypeptide is Large ribosomal subunit protein uL1 (Bradyrhizobium sp. (strain ORS 278)).